Reading from the N-terminus, the 416-residue chain is Phosphoglycerate kinase (416 aa).

(2R)-3-phosphoglycerate-binding residues include V23, D24, F25, N26, Q38, R39, S62, H63, G65, R66, L121, R122, H168, and R169. Residue G212 participates in ADP binding. G212 contributes to the CDP binding site. AMP contacts are provided by A213 and K214. A213 is an ATP binding site. Residue A213 coordinates Mg(2+). Positions 216 and 217 each coordinate Mg(2+). D217 is a binding site for CDP. Position 218 (K218) interacts with AMP. Residue K218 coordinates ATP. G236 contacts ADP. G236 is a binding site for CDP. Residues G237 and G311 each coordinate AMP. 2 residues coordinate ATP: G237 and G311. CDP is bound by residues G336 and F341. An ADP-binding site is contributed by F341. E342 lines the AMP pocket. ATP is bound by residues E342, D373, and T374. Residue D373 participates in Mg(2+) binding.

The protein belongs to the phosphoglycerate kinase family. Monomer. Requires Mg(2+) as cofactor.

It is found in the cytoplasm. It localises to the mitochondrion. It catalyses the reaction (2R)-3-phosphoglycerate + ATP = (2R)-3-phospho-glyceroyl phosphate + ADP. It participates in carbohydrate degradation; glycolysis; pyruvate from D-glyceraldehyde 3-phosphate: step 2/5. Functionally, catalyzes one of the two ATP producing reactions in the glycolytic pathway via the reversible conversion of 1,3-diphosphoglycerate to 3-phosphoglycerate. Both L- and D- forms of purine and pyrimidine nucleotides can be used as substrates, but the activity is much lower on pyrimidines. Negatively regulates the biosynthesis of acetyl-CoA from pyruvate in the mitochondrion. The protein is Phosphoglycerate kinase (PGK1) of Candida glabrata (strain ATCC 2001 / BCRC 20586 / JCM 3761 / NBRC 0622 / NRRL Y-65 / CBS 138) (Yeast).